A 263-amino-acid chain; its full sequence is MLTFPRIDPVAITLGPLQFRWYGLMYLFGFLSGWWLGRRRAAQPGSRWTGEMVDDMVTYVILGVVLGGRIGYILFYDLAYYLGNPTQIFSIWNGGMSFHGGLLGVVFAMWLLGRRNGLGFMDVSDFVAPLIPPGLFFGRIGNFINGELWGKHTTLPWGMVFPDGGPFPRHPSQLYECALEGVILFLALWVFSSRKRPTGHVSGLFALLYGVFRFTVEFVREPDVQLGYLAFGWLTMGQVLCLPLIMLGLWLLRPGGDKGTKAA.

4 consecutive transmembrane segments (helical) span residues 10 to 30, 56 to 76, 91 to 111, and 117 to 137; these read VAITLGPLQFRWYGLMYLFGF, MVTYVILGVVLGGRIGYILFY, IWNGGMSFHGGLLGVVFAMWL, and GLGFMDVSDFVAPLIPPGLFF. R139 provides a ligand contact to a 1,2-diacyl-sn-glycero-3-phospho-(1'-sn-glycerol). A run of 3 helical transmembrane segments spans residues 171–191, 199–219, and 231–251; these read PSQLYECALEGVILFLALWVF, GHVSGLFALLYGVFRFTVEFV, and FGWLTMGQVLCLPLIMLGLWL.

It belongs to the Lgt family.

It is found in the cell inner membrane. It carries out the reaction L-cysteinyl-[prolipoprotein] + a 1,2-diacyl-sn-glycero-3-phospho-(1'-sn-glycerol) = an S-1,2-diacyl-sn-glyceryl-L-cysteinyl-[prolipoprotein] + sn-glycerol 1-phosphate + H(+). It functions in the pathway protein modification; lipoprotein biosynthesis (diacylglyceryl transfer). In terms of biological role, catalyzes the transfer of the diacylglyceryl group from phosphatidylglycerol to the sulfhydryl group of the N-terminal cysteine of a prolipoprotein, the first step in the formation of mature lipoproteins. The polypeptide is Phosphatidylglycerol--prolipoprotein diacylglyceryl transferase (Nitratidesulfovibrio vulgaris (strain ATCC 29579 / DSM 644 / CCUG 34227 / NCIMB 8303 / VKM B-1760 / Hildenborough) (Desulfovibrio vulgaris)).